Here is a 153-residue protein sequence, read N- to C-terminus: Ribonuclease HI (153 aa).

Residues 1-141 (MKSVNIFTDG…CDELAKLGAN (141 aa)) form the RNase H type-1 domain. Mg(2+) contacts are provided by Asp9, Glu47, Asp69, and Asp133.

It belongs to the RNase H family. In terms of assembly, monomer. Mg(2+) is required as a cofactor.

The protein localises to the cytoplasm. It carries out the reaction Endonucleolytic cleavage to 5'-phosphomonoester.. Its function is as follows. Endonuclease that specifically degrades the RNA of RNA-DNA hybrids. This Haemophilus ducreyi (strain 35000HP / ATCC 700724) protein is Ribonuclease HI.